The sequence spans 152 residues: Flagellar assembly factor FliW (152 aa).

It belongs to the FliW family. As to quaternary structure, interacts with translational regulator CsrA and flagellin(s).

The protein localises to the cytoplasm. Its function is as follows. Acts as an anti-CsrA protein, binds CsrA and prevents it from repressing translation of its target genes, one of which is flagellin. Binds to flagellin and participates in the assembly of the flagellum. This is Flagellar assembly factor FliW from Caldicellulosiruptor bescii (strain ATCC BAA-1888 / DSM 6725 / KCTC 15123 / Z-1320) (Anaerocellum thermophilum).